A 279-amino-acid polypeptide reads, in one-letter code: Shikimate dehydrogenase (NADP(+)) (279 aa).

Residues 21 to 23 and Thr68 each bind shikimate; that span reads SMS. Catalysis depends on Lys72, which acts as the Proton acceptor. Shikimate is bound by residues Asn93 and Asp108. NADP(+) contacts are provided by residues 130 to 134 and Leu219; that span reads GAGGA. Tyr221 lines the shikimate pocket. Gly242 lines the NADP(+) pocket.

It belongs to the shikimate dehydrogenase family. In terms of assembly, homodimer.

The enzyme catalyses shikimate + NADP(+) = 3-dehydroshikimate + NADPH + H(+). The protein operates within metabolic intermediate biosynthesis; chorismate biosynthesis; chorismate from D-erythrose 4-phosphate and phosphoenolpyruvate: step 4/7. Its function is as follows. Involved in the biosynthesis of the chorismate, which leads to the biosynthesis of aromatic amino acids. Catalyzes the reversible NADPH linked reduction of 3-dehydroshikimate (DHSA) to yield shikimate (SA). The polypeptide is Shikimate dehydrogenase (NADP(+)) (Oleidesulfovibrio alaskensis (strain ATCC BAA-1058 / DSM 17464 / G20) (Desulfovibrio alaskensis)).